The following is a 270-amino-acid chain: BPI fold-containing family A member 1 (270 aa).

The N-terminal stretch at 1 to 19 (MFLVGSLVVLCGLLAQSTA) is a signal peptide. The segment at 104–109 (LVGGLL) is important for surfactant activity and antibacterial properties. Asn174 carries N-linked (GlcNAc...) asparagine glycosylation. Cys196 and Cys238 are joined by a disulfide.

This sequence belongs to the BPI/LBP/Plunc superfamily. Plunc family. As to quaternary structure, monomer. Interacts (via N-terminus) with SCNN1B, a subunit of the heterotrimeric epithelial sodium channel (ENaC); this inhibits proteolytic activation of ENaC. As to expression, detected in adult nasal epithelium, heart, lung, spleen, testis and salivary gland, and in embryonic nasal epithelium, lung, salivary gland and thymus.

The protein localises to the secreted. Functionally, lipid-binding protein which shows high specificity for the surfactant phospholipid dipalmitoylphosphatidylcholine (DPPC). Plays a role in the innate immune responses of the upper airways. Reduces the surface tension in secretions from airway epithelia and inhibits the formation of biofilm by pathogenic Gram-negative bacteria, such as P.aeruginosa and K.pneumoniae. Negatively regulates proteolytic cleavage of SCNN1G, an event that is required for activation of the epithelial sodium channel (ENaC), and thereby contributes to airway surface liquid homeostasis and proper clearance of mucus. Plays a role in the airway inflammatory response after exposure to irritants. May attract macrophages and neutrophils. In Rattus norvegicus (Rat), this protein is BPI fold-containing family A member 1 (Bpifa1).